The sequence spans 117 residues: Large ribosomal subunit protein bL31B (117 aa).

The segment at 75–117 (KRFERKKEASPADTPPESDSTTENASVEKKAEKKRVTAKGSKK) is disordered. A compositionally biased stretch (basic and acidic residues) spans 100-109 (SVEKKAEKKR).

The protein belongs to the bacterial ribosomal protein bL31 family. Type B subfamily. In terms of assembly, part of the 50S ribosomal subunit.

In Protochlamydia amoebophila (strain UWE25), this protein is Large ribosomal subunit protein bL31B.